The primary structure comprises 160 residues: Nucleotide-binding protein Smal_3487 (160 aa).

Belongs to the YajQ family.

Functionally, nucleotide-binding protein. The protein is Nucleotide-binding protein Smal_3487 of Stenotrophomonas maltophilia (strain R551-3).